The chain runs to 300 residues: Type 1 fimbrin D-mannose specific adhesin (300 aa).

Residues 1–21 (MKRVITLFAVLLMGWSVNAWS) form the signal peptide.

The protein belongs to the fimbrial protein family.

It localises to the fimbrium. Involved in regulation of length and mediation of adhesion of type 1 fimbriae (but not necessary for the production of fimbriae). Adhesin responsible for the binding to D-mannose. It is laterally positioned at intervals in the structure of the type 1 fimbriae. In order to integrate FimH in the fimbriae FimF and FimG are needed. This chain is Type 1 fimbrin D-mannose specific adhesin (fimH), found in Escherichia coli (strain K12).